Reading from the N-terminus, the 67-residue chain is uncharacterized protein (67 aa).

This is an uncharacterized protein from Acidianus sp. F28 (AFV-2).